We begin with the raw amino-acid sequence, 217 residues long: Membrane-associated progesterone receptor component 2 (217 aa).

The O-linked (Xyl...) (chondroitin sulfate) serine glycan is linked to Ser15. The chain crosses the membrane as a helical span at residues 40–62 (ALLATGGEMLLNVALVALVLLGA). Residues Ser84, Ser98, and Ser202 each carry the phosphoserine modification. Positions 96-195 (DFSLEQLRQY…EKYDYVGRLL (100 aa)) constitute a Cytochrome b5 heme-binding domain. A disordered region spans residues 196 to 217 (KPGEEPSEYTDEEDTKDHSKQD). Acidic residues predominate over residues 200–209 (EPSEYTDEED). Position 204 is a phosphotyrosine (Tyr204). Thr205 is subject to Phosphothreonine.

This sequence belongs to the cytochrome b5 family. MAPR subfamily. In terms of assembly, interacts with PGRMC1. Interacts with AAAS.

It is found in the membrane. The protein resides in the nucleus envelope. Its subcellular location is the endoplasmic reticulum. It localises to the secreted. Required for the maintenance of uterine histoarchitecture and normal female reproductive lifespan. May serve as a universal non-classical progesterone receptor in the uterus. Intracellular heme chaperone required for delivery of labile, or signaling heme, to the nucleus. Plays a role in adipocyte function and systemic glucose homeostasis. In brown fat, which has a high demand for heme, delivery of labile heme in the nucleus regulates the activity of heme-responsive transcriptional repressors such as NR1D1 and BACH1. The sequence is that of Membrane-associated progesterone receptor component 2 from Rattus norvegicus (Rat).